A 205-amino-acid chain; its full sequence is MEIACLDLEGVLVPEIWIAFAEKTGIDALKATTRDIPDYDVLMKQRLRILDEHGLKLGDIQEVIATLKPLEGAVEFVDWLRERFQVVILSDTFYEFSQPLMRQLGFPTLLCHKLEIDDSDRVVGYQLRQKDPKRQSVIAFKSLYYRVIAAGDSYNDTTMLSEAHAGILFHAPENVIREFPQFPAVHTYEDLKREFLKASSRSLSL.

D7 serves as the catalytic Nucleophile. Mg(2+) is bound by residues D7 and E9. The Proton donor role is filled by E9. Residues E15, R46, 90–91, and K133 each bind substrate; that span reads SD. D152 contributes to the Mg(2+) binding site. N155 is a substrate binding site.

This sequence belongs to the thrH family. Mg(2+) is required as a cofactor.

It carries out the reaction O-phospho-L-serine + H2O = L-serine + phosphate. The catalysed reaction is O-phospho-D-serine + H2O = D-serine + phosphate. It participates in amino-acid biosynthesis; L-serine biosynthesis; L-serine from 3-phospho-D-glycerate: step 3/3. In terms of biological role, phosphoserine phosphatase that mediates dephosphorylation of phosphoserine in the serine biosynthesis pathway. Also able to dephosphorylate other substrates such as phospho-L(or D)-threonine, with lower activity. Shows phosphoserine:homoserine phosphotransferase activity by transferring the phosphoryl group to homoserine using phosphoserine as the phosphoryl group donor. The protein is Phosphoserine phosphatase ThrH (thrH) of Pseudomonas aeruginosa (strain ATCC 15692 / DSM 22644 / CIP 104116 / JCM 14847 / LMG 12228 / 1C / PRS 101 / PAO1).